The sequence spans 336 residues: Foldase protein PrsA (336 aa).

The first 22 residues, 1 to 22 (MKSAKKLLSVLCLGIFILTFTA), serve as a signal peptide directing secretion. A lipid anchor (N-palmitoyl cysteine) is attached at Cys23. A lipid anchor (S-diacylglycerol cysteine) is attached at Cys23. Positions 194-286 (PNTMNVSHIL…FGYHIIKINS (93 aa)) constitute a PpiC domain.

Belongs to the PrsA family.

It is found in the cell membrane. The enzyme catalyses [protein]-peptidylproline (omega=180) = [protein]-peptidylproline (omega=0). In terms of biological role, plays a major role in protein secretion by helping the post-translocational extracellular folding of several secreted proteins. The sequence is that of Foldase protein PrsA from Clostridium botulinum (strain 657 / Type Ba4).